The following is a 79-amino-acid chain: D-alanyl carrier protein (79 aa).

The 77-residue stretch at 1–77 (MDIKSEVLAI…KIVAGVTELC (77 aa)) folds into the Carrier domain. Ser-35 bears the O-(pantetheine 4'-phosphoryl)serine mark.

Belongs to the DltC family. 4'-phosphopantetheine is transferred from CoA to a specific serine of apo-DCP.

The protein resides in the cytoplasm. Its pathway is cell wall biogenesis; lipoteichoic acid biosynthesis. In terms of biological role, carrier protein involved in the D-alanylation of lipoteichoic acid (LTA). The loading of thioester-linked D-alanine onto DltC is catalyzed by D-alanine--D-alanyl carrier protein ligase DltA. The DltC-carried D-alanyl group is further transferred to cell membrane phosphatidylglycerol (PG) by forming an ester bond, probably catalyzed by DltD. D-alanylation of LTA plays an important role in modulating the properties of the cell wall in Gram-positive bacteria, influencing the net charge of the cell wall. The protein is D-alanyl carrier protein of Streptococcus agalactiae serotype Ia (strain ATCC 27591 / A909 / CDC SS700).